Consider the following 281-residue polypeptide: Tryptophan 2,3-dioxygenase (281 aa).

Substrate contacts are provided by residues 50 to 54 (FIIQH), Tyr112, and Arg116. His239 contacts heme. Substrate is bound at residue Thr253.

It belongs to the tryptophan 2,3-dioxygenase family. Homotetramer. Requires heme as cofactor.

It catalyses the reaction L-tryptophan + O2 = N-formyl-L-kynurenine. The protein operates within amino-acid degradation; L-tryptophan degradation via kynurenine pathway; L-kynurenine from L-tryptophan: step 1/2. Heme-dependent dioxygenase that catalyzes the oxidative cleavage of the L-tryptophan (L-Trp) pyrrole ring and converts L-tryptophan to N-formyl-L-kynurenine. Catalyzes the oxidative cleavage of the indole moiety. The protein is Tryptophan 2,3-dioxygenase of Saccharopolyspora erythraea (strain ATCC 11635 / DSM 40517 / JCM 4748 / NBRC 13426 / NCIMB 8594 / NRRL 2338).